We begin with the raw amino-acid sequence, 93 residues long: Large ribosomal subunit protein uL23cz/uL23cy (93 aa).

It belongs to the universal ribosomal protein uL23 family. Part of the 50S ribosomal subunit.

Its subcellular location is the plastid. It localises to the chloroplast. Its function is as follows. Binds to 23S rRNA. This Arabidopsis thaliana (Mouse-ear cress) protein is Large ribosomal subunit protein uL23cz/uL23cy (rpl23-A).